The sequence spans 87 residues: Cell division protein ZapA (87 aa).

The stretch at 64–87 forms a coiled coil; that stretch reads VHDYIKLKEEYDRLLQKLHKEKDE.

It belongs to the ZapA family. Type 2 subfamily. Homodimer. Interacts with FtsZ.

It localises to the cytoplasm. In terms of biological role, activator of cell division through the inhibition of FtsZ GTPase activity, therefore promoting FtsZ assembly into bundles of protofilaments necessary for the formation of the division Z ring. It is recruited early at mid-cell but it is not essential for cell division. The polypeptide is Cell division protein ZapA (Geobacillus sp. (strain WCH70)).